The following is a 465-amino-acid chain: UDP-N-acetylmuramate--L-alanine ligase (465 aa).

Gly-115–Thr-121 lines the ATP pocket.

It belongs to the MurCDEF family.

It is found in the cytoplasm. The catalysed reaction is UDP-N-acetyl-alpha-D-muramate + L-alanine + ATP = UDP-N-acetyl-alpha-D-muramoyl-L-alanine + ADP + phosphate + H(+). It functions in the pathway cell wall biogenesis; peptidoglycan biosynthesis. Cell wall formation. In Renibacterium salmoninarum (strain ATCC 33209 / DSM 20767 / JCM 11484 / NBRC 15589 / NCIMB 2235), this protein is UDP-N-acetylmuramate--L-alanine ligase.